The primary structure comprises 245 residues: Uridylate kinase (245 aa).

15 to 18 lines the ATP pocket; the sequence is KLSG. Residues 23–28 form an involved in allosteric activation by GTP region; it reads GDEGFG. Gly-57 is a binding site for UMP. ATP contacts are provided by Gly-58 and Arg-62. UMP is bound by residues Asp-77 and 138 to 145; that span reads TGNPFCTT. ATP-binding residues include Thr-165, Tyr-171, and Asp-174.

Belongs to the UMP kinase family. In terms of assembly, homohexamer.

Its subcellular location is the cytoplasm. It carries out the reaction UMP + ATP = UDP + ADP. It functions in the pathway pyrimidine metabolism; CTP biosynthesis via de novo pathway; UDP from UMP (UMPK route): step 1/1. With respect to regulation, allosterically activated by GTP. Inhibited by UTP. In terms of biological role, catalyzes the reversible phosphorylation of UMP to UDP. This chain is Uridylate kinase, found in Shewanella baltica (strain OS155 / ATCC BAA-1091).